A 383-amino-acid polypeptide reads, in one-letter code: Dimethylsulfoniopropionate lyase 3 (383 aa).

Belongs to the aspartate/glutamate racemases family. ALMA1 subfamily. Homotetramer.

The enzyme catalyses S,S-dimethyl-beta-propiothetin = acrylate + dimethyl sulfide + H(+). Its function is as follows. Mediates cleavage of dimethylsulfoniopropionate (DMSP) into dimethyl sulfide (DMS) and acrylate. DMS is the principal form by which sulfur is transported from oceans to the atmosphere and is a key component of the ocean sulfur cycle. The protein is Dimethylsulfoniopropionate lyase 3 of Emiliania huxleyi (strain CCMP1516).